Reading from the N-terminus, the 126-residue chain is MARIAGVDLPDHKKLEVALTYIYGIGWSKAREVCEQTGIPSIKKLGELTPEELNQLRRYIEQNIKVEGDLRREVQLNIKRLVDIGTYRGLRHVRGLPVRGQQTKTNARTRKGRRKGTVANKKKVSK.

A disordered region spans residues 96 to 126 (LPVRGQQTKTNARTRKGRRKGTVANKKKVSK). The segment covering 107 to 126 (ARTRKGRRKGTVANKKKVSK) has biased composition (basic residues).

It belongs to the universal ribosomal protein uS13 family. In terms of assembly, part of the 30S ribosomal subunit. Forms a loose heterodimer with protein S19. Forms two bridges to the 50S subunit in the 70S ribosome.

Its function is as follows. Located at the top of the head of the 30S subunit, it contacts several helices of the 16S rRNA. In the 70S ribosome it contacts the 23S rRNA (bridge B1a) and protein L5 of the 50S subunit (bridge B1b), connecting the 2 subunits; these bridges are implicated in subunit movement. Contacts the tRNAs in the A and P-sites. This Hydrogenobaculum sp. (strain Y04AAS1) protein is Small ribosomal subunit protein uS13.